A 206-amino-acid polypeptide reads, in one-letter code: Pyridoxine/pyridoxamine 5'-phosphate oxidase (206 aa).

FMN-binding positions include 53–58 (RMVLLK), 68–69 (YT), K75, and Q97. A substrate-binding site is contributed by K58. Positions 115, 119, and 123 each coordinate substrate. Residues 132 to 133 (QS) and W177 contribute to the FMN site. 183–185 (RLH) lines the substrate pocket. R187 provides a ligand contact to FMN.

Belongs to the pyridoxamine 5'-phosphate oxidase family. As to quaternary structure, homodimer. FMN is required as a cofactor.

It carries out the reaction pyridoxamine 5'-phosphate + O2 + H2O = pyridoxal 5'-phosphate + H2O2 + NH4(+). It catalyses the reaction pyridoxine 5'-phosphate + O2 = pyridoxal 5'-phosphate + H2O2. It functions in the pathway cofactor metabolism; pyridoxal 5'-phosphate salvage; pyridoxal 5'-phosphate from pyridoxamine 5'-phosphate: step 1/1. It participates in cofactor metabolism; pyridoxal 5'-phosphate salvage; pyridoxal 5'-phosphate from pyridoxine 5'-phosphate: step 1/1. Its function is as follows. Catalyzes the oxidation of either pyridoxine 5'-phosphate (PNP) or pyridoxamine 5'-phosphate (PMP) into pyridoxal 5'-phosphate (PLP). The chain is Pyridoxine/pyridoxamine 5'-phosphate oxidase from Rhizobium johnstonii (strain DSM 114642 / LMG 32736 / 3841) (Rhizobium leguminosarum bv. viciae).